A 460-amino-acid chain; its full sequence is ATP synthase subunit beta (460 aa).

Position 150–157 (150–157 (GGAGVGKT)) interacts with ATP.

This sequence belongs to the ATPase alpha/beta chains family. As to quaternary structure, F-type ATPases have 2 components, CF(1) - the catalytic core - and CF(0) - the membrane proton channel. CF(1) has five subunits: alpha(3), beta(3), gamma(1), delta(1), epsilon(1). CF(0) has three main subunits: a(1), b(2) and c(9-12). The alpha and beta chains form an alternating ring which encloses part of the gamma chain. CF(1) is attached to CF(0) by a central stalk formed by the gamma and epsilon chains, while a peripheral stalk is formed by the delta and b chains.

The protein localises to the cell inner membrane. The catalysed reaction is ATP + H2O + 4 H(+)(in) = ADP + phosphate + 5 H(+)(out). Its function is as follows. Produces ATP from ADP in the presence of a proton gradient across the membrane. The catalytic sites are hosted primarily by the beta subunits. This chain is ATP synthase subunit beta, found in Salmonella paratyphi A (strain ATCC 9150 / SARB42).